The following is a 287-amino-acid chain: AA9 family lytic polysaccharide monooxygenase D (287 aa).

The first 17 residues, 1–17 (MKLSLLAAAAIAPMVSA), serve as a signal peptide directing secretion. H18 contacts Cu(2+). Residues C67 and C189 are joined by a disulfide bond. H176 is a binding site for O2. Residue Y186 participates in Cu(2+) binding. N-linked (GlcNAc...) asparagine glycosylation is found at N220 and N250. Residues 239 to 287 (TGGSGSSTGSYNESNAEDSNEYPYQKESGTCQSNFYRREHARDFSHRRA) form a disordered region. Over residues 274-287 (YRREHARDFSHRRA) the composition is skewed to basic and acidic residues.

This sequence belongs to the polysaccharide monooxygenase AA9 family. It depends on Cu(2+) as a cofactor.

The protein resides in the secreted. The catalysed reaction is [(1-&gt;4)-beta-D-glucosyl]n+m + reduced acceptor + O2 = 4-dehydro-beta-D-glucosyl-[(1-&gt;4)-beta-D-glucosyl]n-1 + [(1-&gt;4)-beta-D-glucosyl]m + acceptor + H2O.. Its function is as follows. Lytic polysaccharide monooxygenase (LPMO) that depolymerizes crystalline and amorphous polysaccharides via the oxidation of scissile alpha- or beta-(1-4)-glycosidic bonds, yielding C1 oxidation products. Catalysis by LPMOs requires the reduction of the active-site copper from Cu(II) to Cu(I) by a reducing agent and H(2)O(2) or O(2) as a cosubstrate. Active on celluloseas as well as on the hemicellulose xyloglucan. Shows synergy with other hydrolases in degrading sorghum stover. In Emericella nidulans (strain FGSC A4 / ATCC 38163 / CBS 112.46 / NRRL 194 / M139) (Aspergillus nidulans), this protein is AA9 family lytic polysaccharide monooxygenase D.